Here is a 113-residue protein sequence, read N- to C-terminus: C-C motif chemokine 15 (113 aa).

Residues 1 to 21 (MKVSVAALSCLMLVAVLGSQA) form the signal peptide. Intrachain disulfides connect Cys53–Cys77, Cys54–Cys93, and Cys64–Cys104.

This sequence belongs to the intercrine beta (chemokine CC) family. Monomer. In terms of processing, the N-terminal is proteolytically cleaved by proteases associated with inflammatory responses. The processed forms CCL15(22-92), CCL15(25-92) and CCL15(29-92) exhibit increase in CCR1-mediated signaling and chemotaxis assays in vitro. Most abundant in heart, skeletal muscle and adrenal gland. Lower levels in placenta, liver, pancreas and bone marrow. CCL15(22-92), CCL15(25-92) and CCL15(29-92) are found in high levels in synovial fluids from rheumatoid patients.

It localises to the secreted. Its function is as follows. Chemotactic factor that attracts T-cells and monocytes, but not neutrophils, eosinophils, or B-cells. Acts mainly via CC chemokine receptor CCR1. Also binds to CCR3. CCL15(22-92), CCL15(25-92) and CCL15(29-92) are more potent chemoattractants than the CCL15. This Homo sapiens (Human) protein is C-C motif chemokine 15 (CCL15).